A 98-amino-acid chain; its full sequence is Co-chaperonin GroES (98 aa).

Belongs to the GroES chaperonin family. As to quaternary structure, heptamer of 7 subunits arranged in a ring. Interacts with the chaperonin GroEL.

The protein localises to the cytoplasm. Its function is as follows. Together with the chaperonin GroEL, plays an essential role in assisting protein folding. The GroEL-GroES system forms a nano-cage that allows encapsulation of the non-native substrate proteins and provides a physical environment optimized to promote and accelerate protein folding. GroES binds to the apical surface of the GroEL ring, thereby capping the opening of the GroEL channel. This is Co-chaperonin GroES from Allorhizobium ampelinum (strain ATCC BAA-846 / DSM 112012 / S4) (Agrobacterium vitis (strain S4)).